A 1475-amino-acid polypeptide reads, in one-letter code: Mediator of RNA polymerase II transcription subunit 1 (1475 aa).

Polar residues predominate over residues 1–10 (MSGSNAKSSG). Disordered regions lie at residues 1-26 (MSGSNAKSSGTGFGSHIPSIEEKNKQ), 616-644 (ETDPQSGSSASGTTVSGSSSSSGSAKTSD), 709-992 (GVTA…VASG), 1135-1166 (QPQPGAAPTSSCLTTSGGSSDSAGSINPAGAS), 1184-1245 (NKTG…SKKA), 1263-1354 (KANS…RFDH), and 1387-1475 (PKLS…LAGE). 3 stretches are compositionally biased toward low complexity: residues 621-641 (SGSSASGTTVSGSSSSSGSAK), 711-729 (TASSSATPTTITITPITGK), and 738-782 (KSTA…SGSS). Phosphoserine occurs at positions 830, 834, 854, and 858. Composition is skewed to polar residues over residues 860-874 (VYSSPKHNTASNSPK) and 888-897 (GKPSMSTLKS). A compositionally biased stretch (low complexity) spans 919 to 934 (TSSGPSASSGSSGATG). Residues 944–953 (APPPPPPIPP) show a composition bias toward pro residues. Low complexity-rich tracts occupy residues 954-966 (LASSSGSISSSQS), 973-989 (SSASGSSSTSSSATAGV), 1143-1159 (TSSCLTTSGGSSDSAGS), 1185-1225 (KTGS…TGST), and 1265-1276 (NSSGNLSSKLSG). Residues 1286–1296 (TKSNSTNSFQE) show a composition bias toward polar residues. Composition is skewed to low complexity over residues 1334–1346 (SGSVSPALSGSMS) and 1399–1409 (TSGRSTPSGSS). 2 stretches are compositionally biased toward polar residues: residues 1415-1430 (GTSSSILGPIASSTGL) and 1442-1458 (SQSGNEGLLNLSSTAGT).

This sequence belongs to the Mediator complex subunit 1 family. In terms of assembly, component of the Mediator complex.

Its subcellular location is the nucleus. Functionally, component of the Mediator complex, a coactivator involved in the regulated transcription of nearly all RNA polymerase II-dependent genes. Mediator functions as a bridge to convey information from gene-specific regulatory proteins to the basal RNA polymerase II transcription machinery. Mediator is recruited to promoters by direct interactions with regulatory proteins and serves as a scaffold for the assembly of a functional preinitiation complex with RNA polymerase II and the general transcription factors. Required for activated transcription of the MtnA, MtnB and MtnD genes. In Drosophila melanogaster (Fruit fly), this protein is Mediator of RNA polymerase II transcription subunit 1 (MED1).